The following is a 230-amino-acid chain: U2 small nuclear ribonucleoprotein A' (230 aa).

LRR repeat units lie at residues 19–40 (KDRE…PFFP), 41–62 (RLRM…LANS), and 65–86 (GLTT…DPLR). The LRRCT domain occupies 99 to 137 (NPVTRKEYYRLWIIWRIPSVRFLDYQKVKDAERAKAAEL). The interval 211-230 (GRIPGGALDGAGNDGDQMQL) is disordered. A compositionally biased stretch (gly residues) spans 213-223 (IPGGALDGAGN).

This sequence belongs to the U2 small nuclear ribonucleoprotein A family. Associated with the spliceosome.

It is found in the nucleus. Its function is as follows. Involved in pre-mRNA splicing. The polypeptide is U2 small nuclear ribonucleoprotein A' (lea1) (Emericella nidulans (strain FGSC A4 / ATCC 38163 / CBS 112.46 / NRRL 194 / M139) (Aspergillus nidulans)).